Consider the following 219-residue polypeptide: Vesicle-associated membrane protein 712 (219 aa).

Topologically, residues 1 to 189 (MSILYALVAR…NNTVWWRNCK (189 aa)) are cytoplasmic. The 105-residue stretch at 7 to 111 (LVARGTVVLA…AMNDEFSRVL (105 aa)) folds into the Longin domain. One can recognise a v-SNARE coiled-coil homology domain in the interval 126-186 (TISRIKGEMN…RRFNNTVWWR (61 aa)). A helical; Anchor for type IV membrane protein transmembrane segment spans residues 190-210 (LTLLLILVLLVIIYIGVAFAC). The Vesicular portion of the chain corresponds to 211 to 219 (HGPTLPSCV).

This sequence belongs to the synaptobrevin family. In terms of tissue distribution, expressed in flowers, leaves, stems and roots.

The protein localises to the vacuole membrane. The protein resides in the prevacuolar compartment membrane. Involved in the targeting and/or fusion of transport vesicles to their target membrane. The sequence is that of Vesicle-associated membrane protein 712 from Arabidopsis thaliana (Mouse-ear cress).